The following is a 567-amino-acid chain: Lactase-like protein (567 aa).

Positions methionine 1–alanine 21 are cleaved as a signal peptide. At arginine 23–glutamate 541 the chain is on the extracellular side. N-linked (GlcNAc...) asparagine glycosylation is found at asparagine 80, asparagine 171, and asparagine 245. Residues isoleucine 542 to leucine 562 form a helical membrane-spanning segment. At leucine 563–serine 567 the chain is on the cytoplasmic side.

This sequence belongs to the glycosyl hydrolase 1 family. Klotho subfamily. In terms of assembly, may form dimers.

The protein localises to the endoplasmic reticulum membrane. Plays a role in formation of the lens suture in the eye, which is important for normal optical properties of the lens. This Homo sapiens (Human) protein is Lactase-like protein (LCTL).